Here is a 274-residue protein sequence, read N- to C-terminus: Large ribosomal subunit protein uL2 (274 aa).

Residues 222-274 (GVAMNPVDHPHGGGEGRGKGHHPQSPWGQLAKGYKTRRGKKASDKLIVRRRNG) form a disordered region. The span at 229–239 (DHPHGGGEGRG) shows a compositional bias: basic and acidic residues.

This sequence belongs to the universal ribosomal protein uL2 family. As to quaternary structure, part of the 50S ribosomal subunit. Forms a bridge to the 30S subunit in the 70S ribosome.

Its function is as follows. One of the primary rRNA binding proteins. Required for association of the 30S and 50S subunits to form the 70S ribosome, for tRNA binding and peptide bond formation. It has been suggested to have peptidyltransferase activity; this is somewhat controversial. Makes several contacts with the 16S rRNA in the 70S ribosome. The polypeptide is Large ribosomal subunit protein uL2 (Thermosipho melanesiensis (strain DSM 12029 / CIP 104789 / BI429)).